The primary structure comprises 328 residues: Cytochrome f (328 aa).

The first 44 residues, 1-44 (MRTPDFSAIWQASKQLTARIILLAFATFALYVFHDLAFPQGAAA), serve as a signal peptide directing secretion. Tyrosine 45, cysteine 66, cysteine 69, and histidine 70 together coordinate heme. Residues 294-314 (IKGLMVFLAGIMLAQILLVIK) form a helical membrane-spanning segment.

Belongs to the cytochrome f family. The 4 large subunits of the cytochrome b6-f complex are cytochrome b6, subunit IV (17 kDa polypeptide, PetD), cytochrome f and the Rieske protein, while the 4 small subunits are PetG, PetL, PetM and PetN. The complex functions as a dimer. It depends on heme as a cofactor.

It localises to the cellular thylakoid membrane. Functionally, component of the cytochrome b6-f complex, which mediates electron transfer between photosystem II (PSII) and photosystem I (PSI), cyclic electron flow around PSI, and state transitions. In Rippkaea orientalis (strain PCC 8801 / RF-1) (Cyanothece sp. (strain PCC 8801)), this protein is Cytochrome f.